The sequence spans 527 residues: UDP-glucuronosyltransferase 2A3 (527 aa).

A signal peptide spans 1–23 (MRSDKSALVFLLLQLFCVGCGFC). The Extracellular portion of the chain corresponds to 24–491 (GKVLVWPCDM…TWFQHYSIDV (468 aa)). An N-linked (GlcNAc...) asparagine glycan is attached at asparagine 313. Residues 492–512 (IGFLLACVATAIFLFTKCFLF) form a helical membrane-spanning segment. The Cytoplasmic portion of the chain corresponds to 513–527 (SCQKFNKTRKIEKRE).

This sequence belongs to the UDP-glycosyltransferase family.

It localises to the membrane. It catalyses the reaction glucuronate acceptor + UDP-alpha-D-glucuronate = acceptor beta-D-glucuronoside + UDP + H(+). Its function is as follows. UDP-glucuronosyltransferases catalyze phase II biotransformation reactions in which lipophilic substrates are conjugated with glucuronic acid to increase water solubility and enhance excretion. They are of major importance in the conjugation and subsequent elimination of potentially toxic xenobiotics and endogenous compounds. The sequence is that of UDP-glucuronosyltransferase 2A3 (UGT2A3) from Homo sapiens (Human).